The chain runs to 179 residues: Crossover junction endodeoxyribonuclease RuvC (179 aa).

Residues aspartate 14, glutamate 74, and aspartate 147 contribute to the active site. Residues aspartate 14, glutamate 74, and aspartate 147 each coordinate Mg(2+).

Belongs to the RuvC family. As to quaternary structure, homodimer which binds Holliday junction (HJ) DNA. The HJ becomes 2-fold symmetrical on binding to RuvC with unstacked arms; it has a different conformation from HJ DNA in complex with RuvA. In the full resolvosome a probable DNA-RuvA(4)-RuvB(12)-RuvC(2) complex forms which resolves the HJ. It depends on Mg(2+) as a cofactor.

The protein resides in the cytoplasm. The catalysed reaction is Endonucleolytic cleavage at a junction such as a reciprocal single-stranded crossover between two homologous DNA duplexes (Holliday junction).. In terms of biological role, the RuvA-RuvB-RuvC complex processes Holliday junction (HJ) DNA during genetic recombination and DNA repair. Endonuclease that resolves HJ intermediates. Cleaves cruciform DNA by making single-stranded nicks across the HJ at symmetrical positions within the homologous arms, yielding a 5'-phosphate and a 3'-hydroxyl group; requires a central core of homology in the junction. The consensus cleavage sequence is 5'-(A/T)TT(C/G)-3'. Cleavage occurs on the 3'-side of the TT dinucleotide at the point of strand exchange. HJ branch migration catalyzed by RuvA-RuvB allows RuvC to scan DNA until it finds its consensus sequence, where it cleaves and resolves the cruciform DNA. This Rubrobacter xylanophilus (strain DSM 9941 / JCM 11954 / NBRC 16129 / PRD-1) protein is Crossover junction endodeoxyribonuclease RuvC.